The chain runs to 296 residues: MSYTKDNDKLYRYLFQNRAVRGEWVRLNDTFTETLNTHQYPKAVQNLLGEMLVATSLLTAIMKFEGTITVQIQGDGPLKLAVVNGNEKQQLRALARTQAEIADNASLSEMIGNGVLVISIMPNDGERYQGVIALDKPTIRECLEDYFIRSEQLQTHLVIRTGEYEGKAVAGGLLLQIMPDGTGTPEDFEHLMTLAETVKDEELFGLEAEELLFRLYHEEQVEVYPPQETEFHCGCSRGRSGNAILLLPMEEIDEMLAEKNGVIDMQCECCGTQYFFDKNAIMEFKQEADKLNQLGL.

2 disulfide bridges follow: C233–C235 and C267–C270.

This sequence belongs to the HSP33 family. Post-translationally, under oxidizing conditions two disulfide bonds are formed involving the reactive cysteines. Under reducing conditions zinc is bound to the reactive cysteines and the protein is inactive.

It is found in the cytoplasm. Functionally, redox regulated molecular chaperone. Protects both thermally unfolding and oxidatively damaged proteins from irreversible aggregation. Plays an important role in the bacterial defense system toward oxidative stress. This Actinobacillus pleuropneumoniae serotype 5b (strain L20) protein is 33 kDa chaperonin.